Here is a 592-residue protein sequence, read N- to C-terminus: Alanine aminotransferase, mitochondrial (592 aa).

A mitochondrion-targeting transit peptide spans M1–H64. S77 is modified (phosphoserine). Pyridoxal 5'-phosphate contacts are provided by A258, S259, Y284, N340, and S409. K412 is subject to N6-(pyridoxal phosphate)lysine. Residue R421 participates in pyridoxal 5'-phosphate binding.

This sequence belongs to the class-I pyridoxal-phosphate-dependent aminotransferase family. Alanine aminotransferase subfamily. Homodimer. It depends on pyridoxal 5'-phosphate as a cofactor.

It localises to the mitochondrion matrix. The enzyme catalyses L-alanine + 2-oxoglutarate = pyruvate + L-glutamate. The protein operates within amino-acid degradation; L-alanine degradation via transaminase pathway; pyruvate from L-alanine: step 1/1. Its function is as follows. Alanine aminotransferase involved in both alanine biosynthesis and utilization. Under respiratory conditions, constitutes the sole pathway for alanine biosynthesis and catabolism. Under fermentative conditions, it plays a catabolic role and alanine is mainly synthesized through an alternative pathway. This is Alanine aminotransferase, mitochondrial (ALT1) from Saccharomyces cerevisiae (strain ATCC 204508 / S288c) (Baker's yeast).